The primary structure comprises 282 residues: Pantothenate synthetase (282 aa).

ATP is bound at residue 30–37 (MGGLHQGH). The Proton donor role is filled by His37. Gln61 serves as a coordination point for (R)-pantoate. Gln61 contacts beta-alanine. Residue 146–149 (GQKD) coordinates ATP. Gln152 is a binding site for (R)-pantoate. ATP-binding positions include Ile175 and 183-186 (MSTR).

Belongs to the pantothenate synthetase family. Homodimer.

The protein localises to the cytoplasm. The catalysed reaction is (R)-pantoate + beta-alanine + ATP = (R)-pantothenate + AMP + diphosphate + H(+). Its pathway is cofactor biosynthesis; (R)-pantothenate biosynthesis; (R)-pantothenate from (R)-pantoate and beta-alanine: step 1/1. Functionally, catalyzes the condensation of pantoate with beta-alanine in an ATP-dependent reaction via a pantoyl-adenylate intermediate. The chain is Pantothenate synthetase from Vesicomyosocius okutanii subsp. Calyptogena okutanii (strain HA).